The primary structure comprises 339 residues: Glycerol-3-phosphate dehydrogenase [NAD(P)+] (339 aa).

Residues S11, W12, and K109 each contribute to the NADPH site. Positions 109, 140, and 142 each coordinate sn-glycerol 3-phosphate. Residue A144 participates in NADPH binding. Sn-glycerol 3-phosphate is bound by residues K195, D249, S259, R260, and N261. K195 acts as the Proton acceptor in catalysis. R260 contributes to the NADPH binding site. Positions 284 and 286 each coordinate NADPH.

This sequence belongs to the NAD-dependent glycerol-3-phosphate dehydrogenase family.

The protein localises to the cytoplasm. It carries out the reaction sn-glycerol 3-phosphate + NAD(+) = dihydroxyacetone phosphate + NADH + H(+). It catalyses the reaction sn-glycerol 3-phosphate + NADP(+) = dihydroxyacetone phosphate + NADPH + H(+). It functions in the pathway membrane lipid metabolism; glycerophospholipid metabolism. Its function is as follows. Catalyzes the reduction of the glycolytic intermediate dihydroxyacetone phosphate (DHAP) to sn-glycerol 3-phosphate (G3P), the key precursor for phospholipid synthesis. This is Glycerol-3-phosphate dehydrogenase [NAD(P)+] from Lactobacillus helveticus (strain DPC 4571).